The primary structure comprises 329 residues: Deoxynucleotidyltransferase terminal-interacting protein 1 (329 aa).

2 disordered regions span residues Met1–Glu22 and Lys147–Ser178. Residues Met56–Lys147 form an important for dimerization region. Basic and acidic residues predominate over residues Lys147–His158. Positions Arg159–Gly173 form a DNA-binding region, a.T hook. At Ser161 the chain carries Phosphoserine. Residues Pro164–Arg170 carry the Nuclear localization signal motif. Residues Arg197–Thr316 are important for DNA and nucleosome binding. Positions Gly216–Pro237 form a DNA-binding region, H-T-H motif.

In terms of assembly, monomer and homodimer. A minor proportion may form homotrimers. Interacts with ZNF541. Interacts with the terminal deoxynucleotidyltransferase DNTT. Interacts with TRERF1. Identified in a histone deacetylase complex that contains DNTTIP1, HDAC1 and MIDEAS; this complex assembles into a tetramer that contains four copies of each protein chain. Component of a histone deacetylase complex containing DNTTIP1, ZNF541, HDAC1 and HDAC2. Identified in a complex with KCTD19, HDAC1, HDAC2 and ZNF541.

Its subcellular location is the nucleus. Its function is as follows. Increases DNTT terminal deoxynucleotidyltransferase activity (in vitro). Also acts as a transcriptional regulator, binding to the consensus sequence 5'-GNTGCATG-3' following an AT-tract. Associates with RAB20 promoter and positively regulates its transcription. Binds DNA and nucleosomes; may recruit HDAC1 complexes to nucleosomes or naked DNA. The polypeptide is Deoxynucleotidyltransferase terminal-interacting protein 1 (DNTTIP1) (Pongo abelii (Sumatran orangutan)).